A 157-amino-acid polypeptide reads, in one-letter code: Endoribonuclease YbeY (157 aa).

The Zn(2+) site is built by H114, H118, and H124.

The protein belongs to the endoribonuclease YbeY family. Zn(2+) is required as a cofactor.

Its subcellular location is the cytoplasm. Functionally, single strand-specific metallo-endoribonuclease involved in late-stage 70S ribosome quality control and in maturation of the 3' terminus of the 16S rRNA. This is Endoribonuclease YbeY from Yersinia pestis.